The following is a 722-amino-acid chain: Leucine-rich repeat and WD repeat-containing protein 1 (722 aa).

LRR repeat units lie at residues 22–42 (DLKK…DQKL), 48–69 (NLDE…LRLH), and 70–91 (NLRI…KQFP). The disordered stretch occupies residues 211-292 (DPKKDTDPVL…QETSAQGTPS (82 aa)). Residues 219–230 (VLQTSEDTAVEN) show a composition bias toward polar residues. 5 WD repeats span residues 456 to 496 (AHKK…CDYN), 506 to 546 (DTTS…KQGR), 565 to 604 (KCFH…KSRK), 623 to 662 (SSET…ADLQ), and 690 to 722 (VDKT…WKIQ).

It belongs to the LRWD1 family. As to quaternary structure, component of the ORC complex.

The protein localises to the nucleus. The protein resides in the chromosome. It localises to the centromere. It is found in the telomere. Its subcellular location is the cytoplasm. The protein localises to the cytoskeleton. The protein resides in the microtubule organizing center. It localises to the centrosome. It is found in the kinetochore. Required for G1/S transition. Recruits and stabilizes the origin recognition complex (ORC) onto chromatin during G1 to establish pre-replication complex (preRC) and to heterochromatic sites in post-replicated cells. Binds a combination of DNA and histone methylation repressive marks on heterochromatin. Required for silencing of major satellite repeats. May be important ORC2, ORC3 and ORC4 stability. The sequence is that of Leucine-rich repeat and WD repeat-containing protein 1 (lrwd1) from Xenopus laevis (African clawed frog).